A 309-amino-acid polypeptide reads, in one-letter code: Manganese-dependent inorganic pyrophosphatase (309 aa).

His-9, Asp-13, Asp-15, Asp-75, His-97, and Asp-149 together coordinate Mn(2+).

Homodimer. The cofactor is Mn(2+).

Its subcellular location is the cytoplasm. It catalyses the reaction diphosphate + H2O = 2 phosphate + H(+). The sequence is that of Manganese-dependent inorganic pyrophosphatase (ppaC) from Bacillus subtilis (strain 168).